A 227-amino-acid polypeptide reads, in one-letter code: Cytochrome c oxidase subunit 2 (227 aa).

Residues 1–14 lie on the Mitochondrial intermembrane side of the membrane; that stretch reads MAYPFQLGLQDATS. The chain crosses the membrane as a helical span at residues 15 to 45; it reads PIMEELTNFHDHTLMIVFLISSLVLYIISLM. Residues 46–59 lie on the Mitochondrial matrix side of the membrane; that stretch reads LTTKLTHTSTMDAQ. The helical transmembrane segment at 60 to 87 threads the bilayer; sequence EVETIWTILPAAILILIALPSLRILYMM. The Mitochondrial intermembrane segment spans residues 88 to 227; the sequence is DEINNPVLTV…YFENWSTSMI (140 aa). Cu cation-binding residues include histidine 161, cysteine 196, glutamate 198, cysteine 200, histidine 204, and methionine 207. Position 198 (glutamate 198) interacts with Mg(2+). Position 218 is a phosphotyrosine (tyrosine 218).

It belongs to the cytochrome c oxidase subunit 2 family. In terms of assembly, component of the cytochrome c oxidase (complex IV, CIV), a multisubunit enzyme composed of 14 subunits. The complex is composed of a catalytic core of 3 subunits MT-CO1, MT-CO2 and MT-CO3, encoded in the mitochondrial DNA, and 11 supernumerary subunits COX4I, COX5A, COX5B, COX6A, COX6B, COX6C, COX7A, COX7B, COX7C, COX8 and NDUFA4, which are encoded in the nuclear genome. The complex exists as a monomer or a dimer and forms supercomplexes (SCs) in the inner mitochondrial membrane with NADH-ubiquinone oxidoreductase (complex I, CI) and ubiquinol-cytochrome c oxidoreductase (cytochrome b-c1 complex, complex III, CIII), resulting in different assemblies (supercomplex SCI(1)III(2)IV(1) and megacomplex MCI(2)III(2)IV(2)). Found in a complex with TMEM177, COA6, COX18, COX20, SCO1 and SCO2. Interacts with TMEM177 in a COX20-dependent manner. Interacts with COX20. Interacts with COX16. The cofactor is Cu cation.

It is found in the mitochondrion inner membrane. It catalyses the reaction 4 Fe(II)-[cytochrome c] + O2 + 8 H(+)(in) = 4 Fe(III)-[cytochrome c] + 2 H2O + 4 H(+)(out). In terms of biological role, component of the cytochrome c oxidase, the last enzyme in the mitochondrial electron transport chain which drives oxidative phosphorylation. The respiratory chain contains 3 multisubunit complexes succinate dehydrogenase (complex II, CII), ubiquinol-cytochrome c oxidoreductase (cytochrome b-c1 complex, complex III, CIII) and cytochrome c oxidase (complex IV, CIV), that cooperate to transfer electrons derived from NADH and succinate to molecular oxygen, creating an electrochemical gradient over the inner membrane that drives transmembrane transport and the ATP synthase. Cytochrome c oxidase is the component of the respiratory chain that catalyzes the reduction of oxygen to water. Electrons originating from reduced cytochrome c in the intermembrane space (IMS) are transferred via the dinuclear copper A center (CU(A)) of subunit 2 and heme A of subunit 1 to the active site in subunit 1, a binuclear center (BNC) formed by heme A3 and copper B (CU(B)). The BNC reduces molecular oxygen to 2 water molecules using 4 electrons from cytochrome c in the IMS and 4 protons from the mitochondrial matrix. In Arvicanthis somalicus (Neumann's grass rat), this protein is Cytochrome c oxidase subunit 2 (MT-CO2).